We begin with the raw amino-acid sequence, 182 residues long: Putative lipoprotein LpqE (182 aa).

The N-terminal stretch at Met1–Gly29 is a signal peptide. Cys30 carries N-palmitoyl cysteine lipidation. Cys30 carries the S-diacylglycerol cysteine lipid modification.

Its subcellular location is the cell membrane. This Mycobacterium bovis (strain ATCC BAA-935 / AF2122/97) protein is Putative lipoprotein LpqE (lpqE).